The following is a 329-amino-acid chain: Ribosomal RNA small subunit methyltransferase H (329 aa).

S-adenosyl-L-methionine contacts are provided by residues 44 to 46 (GGY), D62, D110, and Q117. Residues 297-329 (APAELAANPRARSARLRSAERTSAPARRLGDAA) are disordered.

Belongs to the methyltransferase superfamily. RsmH family.

It localises to the cytoplasm. The catalysed reaction is cytidine(1402) in 16S rRNA + S-adenosyl-L-methionine = N(4)-methylcytidine(1402) in 16S rRNA + S-adenosyl-L-homocysteine + H(+). In terms of biological role, specifically methylates the N4 position of cytidine in position 1402 (C1402) of 16S rRNA. The polypeptide is Ribosomal RNA small subunit methyltransferase H (Rhodospirillum centenum (strain ATCC 51521 / SW)).